The following is a 101-amino-acid chain: Large ribosomal subunit protein bL21 (101 aa).

The protein belongs to the bacterial ribosomal protein bL21 family. As to quaternary structure, part of the 50S ribosomal subunit. Contacts protein L20.

Its function is as follows. This protein binds to 23S rRNA in the presence of protein L20. In Anaeromyxobacter dehalogenans (strain 2CP-1 / ATCC BAA-258), this protein is Large ribosomal subunit protein bL21.